We begin with the raw amino-acid sequence, 606 residues long: KH domain-containing protein At4g18375 (606 aa).

Positions 1–10 are enriched in basic residues; it reads MVERKKRKQI. The disordered stretch occupies residues 1-26; it reads MVERKKRKQIQRNNSESNRNQKRRIS. KH domains lie at 35–99, 138–210, 311–380, 394–455, and 535–599; these read LVVY…IGFT, NKEC…LFAV, ELVF…VEAV, NVKM…LIQI, and SSAL…ENLV.

The protein resides in the nucleus. This Arabidopsis thaliana (Mouse-ear cress) protein is KH domain-containing protein At4g18375.